Here is a 464-residue protein sequence, read N- to C-terminus: 3-isopropylmalate dehydratase large subunit (464 aa).

[4Fe-4S] cluster contacts are provided by Cys337, Cys397, and Cys400.

This sequence belongs to the aconitase/IPM isomerase family. LeuC type 1 subfamily. In terms of assembly, heterodimer of LeuC and LeuD. The cofactor is [4Fe-4S] cluster.

It carries out the reaction (2R,3S)-3-isopropylmalate = (2S)-2-isopropylmalate. The protein operates within amino-acid biosynthesis; L-leucine biosynthesis; L-leucine from 3-methyl-2-oxobutanoate: step 2/4. In terms of biological role, catalyzes the isomerization between 2-isopropylmalate and 3-isopropylmalate, via the formation of 2-isopropylmaleate. The sequence is that of 3-isopropylmalate dehydratase large subunit from Bacillus cereus (strain AH820).